A 919-amino-acid polypeptide reads, in one-letter code: Valine--tRNA ligase (919 aa).

A 'HIGH' region motif is present at residues 66–76; it reads PNVTGQLHMGH. The 'KMSKS' region signature appears at 562 to 566; the sequence is KMSKS. Lys565 contributes to the ATP binding site. Residues 852 to 919 are a coiled coil; sequence TVDKEAERKR…RISARLEELK (68 aa).

The protein belongs to the class-I aminoacyl-tRNA synthetase family. ValS type 1 subfamily. Monomer.

It is found in the cytoplasm. The enzyme catalyses tRNA(Val) + L-valine + ATP = L-valyl-tRNA(Val) + AMP + diphosphate. Functionally, catalyzes the attachment of valine to tRNA(Val). As ValRS can inadvertently accommodate and process structurally similar amino acids such as threonine, to avoid such errors, it has a 'posttransfer' editing activity that hydrolyzes mischarged Thr-tRNA(Val) in a tRNA-dependent manner. The protein is Valine--tRNA ligase of Corynebacterium diphtheriae (strain ATCC 700971 / NCTC 13129 / Biotype gravis).